Reading from the N-terminus, the 93-residue chain is Small ribosomal subunit protein uS19 (93 aa).

This sequence belongs to the universal ribosomal protein uS19 family.

Functionally, protein S19 forms a complex with S13 that binds strongly to the 16S ribosomal RNA. The sequence is that of Small ribosomal subunit protein uS19 from Dehalococcoides mccartyi (strain ATCC BAA-2266 / KCTC 15142 / 195) (Dehalococcoides ethenogenes (strain 195)).